Consider the following 405-residue polypeptide: Argininosuccinate synthase (405 aa).

ATP-binding positions include 10-18 and Ala-37; that span reads AYSGGLDTS. The L-citrulline site is built by Tyr-88 and Ser-93. ATP is bound at residue Gly-118. Residues Thr-120, Asn-124, and Asp-125 each contribute to the L-aspartate site. Position 124 (Asn-124) interacts with L-citrulline. Residues Arg-128, Ser-179, Ser-188, Glu-264, and Tyr-276 each coordinate L-citrulline.

This sequence belongs to the argininosuccinate synthase family. Type 1 subfamily. Homotetramer.

Its subcellular location is the cytoplasm. It carries out the reaction L-citrulline + L-aspartate + ATP = 2-(N(omega)-L-arginino)succinate + AMP + diphosphate + H(+). Its pathway is amino-acid biosynthesis; L-arginine biosynthesis; L-arginine from L-ornithine and carbamoyl phosphate: step 2/3. The protein is Argininosuccinate synthase of Stutzerimonas stutzeri (strain A1501) (Pseudomonas stutzeri).